We begin with the raw amino-acid sequence, 343 residues long: Dihydroorotase (343 aa).

2 residues coordinate Zn(2+): H14 and H16. Substrate-binding positions include 16–18 (HLR) and N42. Zn(2+) contacts are provided by K100, H137, and H175. K100 carries the post-translational modification N6-carboxylysine. H137 contributes to the substrate binding site. Residue L220 participates in substrate binding. A Zn(2+)-binding site is contributed by D248. D248 is a catalytic residue. The substrate site is built by H252 and A264.

The protein belongs to the metallo-dependent hydrolases superfamily. DHOase family. Class II DHOase subfamily. Homodimer. Requires Zn(2+) as cofactor.

The enzyme catalyses (S)-dihydroorotate + H2O = N-carbamoyl-L-aspartate + H(+). It participates in pyrimidine metabolism; UMP biosynthesis via de novo pathway; (S)-dihydroorotate from bicarbonate: step 3/3. Its function is as follows. Catalyzes the reversible cyclization of carbamoyl aspartate to dihydroorotate. In Synechococcus sp. (strain CC9902), this protein is Dihydroorotase.